Here is a 249-residue protein sequence, read N- to C-terminus: tRNA pseudouridine synthase A (249 aa).

The active-site Nucleophile is Asp53. Tyr111 serves as a coordination point for substrate.

The protein belongs to the tRNA pseudouridine synthase TruA family. In terms of assembly, homodimer.

It catalyses the reaction uridine(38/39/40) in tRNA = pseudouridine(38/39/40) in tRNA. Formation of pseudouridine at positions 38, 39 and 40 in the anticodon stem and loop of transfer RNAs. The protein is tRNA pseudouridine synthase A of Streptococcus pneumoniae (strain P1031).